Consider the following 244-residue polypeptide: Tetraspanin-1 (244 aa).

4 helical membrane passes run Val11–Phe31, Leu67–Leu87, Tyr104–Val124, and Ile198–Ile218.

It belongs to the tetraspanin (TM4SF) family.

Its subcellular location is the membrane. This is Tetraspanin-1 (tsp-1) from Caenorhabditis elegans.